A 109-amino-acid polypeptide reads, in one-letter code: MNERDDILQAVYRVIKERKGASADSSYTASLLQKGIDKILKKLGEEATEVVIAGKGGKREEIVYETADLFFHTLVLLGYYDIDPEEIYAELRRRFGTSGIAEKASRPKE.

It belongs to the PRA-PH family.

The protein localises to the cytoplasm. It carries out the reaction 1-(5-phospho-beta-D-ribosyl)-ATP + H2O = 1-(5-phospho-beta-D-ribosyl)-5'-AMP + diphosphate + H(+). Its pathway is amino-acid biosynthesis; L-histidine biosynthesis; L-histidine from 5-phospho-alpha-D-ribose 1-diphosphate: step 2/9. This chain is Phosphoribosyl-ATP pyrophosphatase, found in Geobacter metallireducens (strain ATCC 53774 / DSM 7210 / GS-15).